We begin with the raw amino-acid sequence, 197 residues long: RILP-like protein 2 (197 aa).

In terms of domain architecture, RH1 spans 14-96 (EDEGALAKSP…KQEVEGLRRA (83 aa)). A coiled-coil region spans residues 65 to 153 (LEALVNEGSL…VQEELQCYRS (89 aa)). The region spanning 119–184 (RPRFTLQELR…GNGEKEERTI (66 aa)) is the RH2 domain.

Homodimer. Interacts (via N-terminus) with MYO5A, the interaction is required for its role in dendrite formation. Interacts with RAC1. Interacts with RAB8A; interaction is dependent on the phosphorylation of RAB8A on 'Thr-72'. Interacts with RAB10 and RAB12; interaction is dependent on the phosphorylation of 'Thr-73' on RAB10 and 'Ser-105' on RAB12.

The protein localises to the cytoplasm. It is found in the cytosol. The protein resides in the cytoskeleton. It localises to the microtubule organizing center. Its subcellular location is the centrosome. The protein localises to the cell projection. It is found in the cilium. Its function is as follows. Involved in cell shape and neuronal morphogenesis, positively regulating the establishment and maintenance of dendritic spines. Plays a role in cellular protein transport, including protein transport away from primary cilia. May function via activation of RAC1 and PAK1. In Rattus norvegicus (Rat), this protein is RILP-like protein 2 (Rilpl2).